The chain runs to 350 residues: Histidinol-phosphate aminotransferase (350 aa).

Lys207 bears the N6-(pyridoxal phosphate)lysine mark.

It belongs to the class-II pyridoxal-phosphate-dependent aminotransferase family. Histidinol-phosphate aminotransferase subfamily. Homodimer. The cofactor is pyridoxal 5'-phosphate.

The enzyme catalyses L-histidinol phosphate + 2-oxoglutarate = 3-(imidazol-4-yl)-2-oxopropyl phosphate + L-glutamate. It functions in the pathway amino-acid biosynthesis; L-histidine biosynthesis; L-histidine from 5-phospho-alpha-D-ribose 1-diphosphate: step 7/9. The sequence is that of Histidinol-phosphate aminotransferase from Streptococcus thermophilus (strain ATCC BAA-491 / LMD-9).